The sequence spans 443 residues: Transcriptional adapter 2-alpha (443 aa).

Ser-6 bears the Phosphoserine mark. Residues 12–69 (SDKPPCRGCSSYLMEPYIKCAECGPPPFFLCLQCFTRGFEYKKHQSDHTYEIMTSDFP) form a ZZ-type zinc finger. 8 residues coordinate Zn(2+): Cys-17, Cys-20, Cys-31, Cys-34, Cys-42, Cys-45, His-55, and His-59. Residues 70 to 122 (VLDPSWTAQEEMALLEAVMDCGFGNWQDVANQMCTKTKEECEKHYMKHFINNP) form the SANT domain. Glycyl lysine isopeptide (Lys-Gly) (interchain with G-Cter in SUMO2) cross-links involve residues Lys-132 and Lys-138. The span at 347 to 359 (LSPSVPMTSNSGR) shows a compositional bias: polar residues. The tract at residues 347 to 372 (LSPSVPMTSNSGRRSAPPLNLTGLPG) is disordered. An SWIRM domain is found at 356–443 (NSGRRSAPPL…LIREGYITKA (88 aa)). A DNA-binding region spans residues 426–435 (KTRKIYDFLI).

Interacts with GCN5 and NR3C1. Associated with the P/CAF protein in the PCAF complex. Component of the PCAF complex, at least composed of TADA2L/ADA2, TADA3L/ADA3, TAF5L/PAF65-beta, TAF6L/PAF65-alpha, TAF10/TAFII30, TAF12/TAFII20, TAF9/TAFII31 and TRRAP. Component of the ADA2A-containing complex (ATAC), composed of KAT14, KAT2A, TADA2L, TADA3L, ZZ3, MBIP, WDR5, YEATS2, CCDC101 and DR1. Interacts with CCDC134.

Its subcellular location is the nucleus. The protein resides in the chromosome. Component of the ATAC complex, a complex with histone acetyltransferase activity on histones H3 and H4. Required for the function of some acidic activation domains, which activate transcription from a distant site. Binds double-stranded DNA. Binds dinucleosomes, probably at the linker region between neighboring nucleosomes. Plays a role in chromatin remodeling. May promote TP53/p53 'Lys-321' acetylation, leading to reduced TP53 stability and transcriptional activity. May also promote XRCC6 acetylation thus facilitating cell apoptosis in response to DNA damage. The protein is Transcriptional adapter 2-alpha (TADA2A) of Bos taurus (Bovine).